Consider the following 293-residue polypeptide: Nitrogenase iron protein (293 aa).

Glycine 10–serine 17 is an ATP binding site. Cysteine 98 provides a ligand contact to [4Fe-4S] cluster. Residue arginine 101 is modified to ADP-ribosylarginine; by dinitrogenase reductase ADP-ribosyltransferase. Cysteine 133 contributes to the [4Fe-4S] cluster binding site.

The protein belongs to the NifH/BchL/ChlL family. Homodimer. It depends on [4Fe-4S] cluster as a cofactor. The reversible ADP-ribosylation of Arg-101 inactivates the nitrogenase reductase and regulates nitrogenase activity.

The enzyme catalyses N2 + 8 reduced [2Fe-2S]-[ferredoxin] + 16 ATP + 16 H2O = H2 + 8 oxidized [2Fe-2S]-[ferredoxin] + 2 NH4(+) + 16 ADP + 16 phosphate + 6 H(+). Functionally, the key enzymatic reactions in nitrogen fixation are catalyzed by the nitrogenase complex, which has 2 components: the iron protein and the molybdenum-iron protein. The polypeptide is Nitrogenase iron protein (Stutzerimonas stutzeri (strain A1501) (Pseudomonas stutzeri)).